The chain runs to 455 residues: MHYSASGLALAFLLPAIQAQQTLYGQCGGSGWTGATSCVAGAACSTLNQWYAQCLPAATTTSTTLTTTTSSVTTTSNPGSTTTTSSVTVTATASGNPFSGYQLYVNPYYSSEVQSIAIPSLTGTLSSLAPAATAAAKVPSFVWLDVAAKVPTMATYLADIRSQNAAGANPPIAGQFVVYDLPDRDCAALASNGEFAISDGGVQHYKDYIDSIREILVEYSDVHVILVIEPDSLANLVTNLNVAKCANAQSAYLECTNYAVTQLNLPNVAMYLDAGHAGWLGWPANLQPAANLYAGVYSDAGSPAALRGLATNVANYNAWAIDTCPSYTQGNSVCDEKDYINALAPLLRAQGFDAHFITDTGRNGKQPTGQQAWGDWCNVIGTGFGARPSTNTGDSLLDAFVWVKPGGESDGTSDTSAARYDAHCGYSDALQPAPEAGTWFQAYFVQLLQNANPSF.

The N-terminal stretch at 1-19 (MHYSASGLALAFLLPAIQA) is a signal peptide. A CBM1 domain is found at 20 to 55 (QQTLYGQCGGSGWTGATSCVAGAACSTLNQWYAQCL). Cystine bridges form between cysteine 27/cysteine 44 and cysteine 38/cysteine 54. The tract at residues 59–92 (TTTSTTLTTTTSSVTTTSNPGSTTTTSSVTVTAT) is thr-rich linker. Residues 66–86 (TTTTSSVTTTSNPGSTTTTSS) form a disordered region. The tract at residues 93–450 (ASGNPFSGYQ…QAYFVQLLQN (358 aa)) is catalytic. The active site involves aspartate 185. Disulfide bonds link cysteine 186/cysteine 245 and cysteine 377/cysteine 424. Aspartate 231 functions as the Proton donor in the catalytic mechanism. The active-site Nucleophile is the aspartate 410.

This sequence belongs to the glycosyl hydrolase 6 (cellulase B) family.

It is found in the secreted. The catalysed reaction is Hydrolysis of (1-&gt;4)-beta-D-glucosidic linkages in cellulose and cellotetraose, releasing cellobiose from the non-reducing ends of the chains.. The biological conversion of cellulose to glucose generally requires three types of hydrolytic enzymes: (1) Endoglucanases which cut internal beta-1,4-glucosidic bonds; (2) Exocellobiohydrolases that cut the disaccharide cellobiose from the non-reducing end of the cellulose polymer chain; (3) Beta-1,4-glucosidases which hydrolyze the cellobiose and other short cello-oligosaccharides to glucose. Active against carboxymethylcellulose, beta-glucan and lichenan. The chain is 1,4-beta-D-glucan cellobiohydrolase C (cbhC) from Emericella nidulans (strain FGSC A4 / ATCC 38163 / CBS 112.46 / NRRL 194 / M139) (Aspergillus nidulans).